Here is a 443-residue protein sequence, read N- to C-terminus: Phosphoglucosamine mutase (443 aa).

Residue serine 101 is the Phosphoserine intermediate of the active site. Serine 101, aspartate 239, aspartate 241, and aspartate 243 together coordinate Mg(2+). At serine 101 the chain carries Phosphoserine.

Belongs to the phosphohexose mutase family. Mg(2+) is required as a cofactor. Activated by phosphorylation.

The catalysed reaction is alpha-D-glucosamine 1-phosphate = D-glucosamine 6-phosphate. Functionally, catalyzes the conversion of glucosamine-6-phosphate to glucosamine-1-phosphate. The sequence is that of Phosphoglucosamine mutase from Francisella tularensis subsp. novicida (strain U112).